Consider the following 245-residue polypeptide: Vacuolar iron transporter (245 aa).

The Cytoplasmic segment spans residues 1–28 (MGEVGESEKYLLNRHKEHHFTAGETVRD). Residues 29-49 (IIIGFSDGLTVPFALAAGLSG) traverse the membrane as a helical segment. At 50 to 55 (ANASSS) the chain is on the vacuolar side. A helical membrane pass occupies residues 56-76 (IILTAGIAEVAAGAISMGLGG). Over 77-162 (YLAAKSEADH…PRRALQSALT (86 aa)) the chain is Cytoplasmic. Fe cation is bound by residues glutamate 94, glutamate 97, glutamate 105, glutamate 108, methionine 141, and glutamate 145. A helical membrane pass occupies residues 163–183 (IAISYVLSGLIPLLPYMFIPI). Residues 184–186 (AQK) are Vacuolar-facing. The helical transmembrane segment at 187-207 (AVVSSVIVTIFALLIFGFAKG) threads the bilayer. At 208-214 (YFTGNKP) the chain is on the cytoplasmic side. The chain crosses the membrane as a helical span at residues 215 to 235 (VWSALQTALIGAIASAAAFGM). The Vacuolar portion of the chain corresponds to 236-245 (AKGCASSVFE).

It belongs to the CCC1 family. Expressed in petal tissues, but not in other parts of the plant, such as leaves, roots, sepals and stems.

The protein resides in the vacuole membrane. It catalyses the reaction Fe(2+)(in) = Fe(2+)(out). Its function is as follows. Vacuolar iron transporter involved in the transfer of iron ions from the cytosol to the vacuole for intracellular iron storage. Plays an essential role in the development of blue coloration in cornflower petals. This Centaurea cyanus (Garden cornflower) protein is Vacuolar iron transporter.